The sequence spans 134 residues: Cytochrome b5 isoform B (134 aa).

Positions 5 to 81 constitute a Cytochrome b5 heme-binding domain; that stretch reads AKIFTLSEVS…MEQYYVGEID (77 aa). Residues His-40 and His-64 each coordinate heme. The helical transmembrane segment at 107–127 threads the bilayer; the sequence is FIIKLLQFLVPLAILGLAVGI.

The protein belongs to the cytochrome b5 family. In terms of assembly, interacts with CER1, FAH1, FAH2 and BI-1.

Its subcellular location is the endoplasmic reticulum membrane. Functionally, membrane bound hemoprotein which function as an electron carrier for several membrane bound oxygenases, including fatty acid desaturases. The sequence is that of Cytochrome b5 isoform B from Arabidopsis thaliana (Mouse-ear cress).